The chain runs to 334 residues: Phospholipase A1 1 (334 aa).

The N-terminal stretch at 1–23 is a signal peptide; sequence MMNLKYLLFFCLVQALHYCYAYG. A propeptide spanning residues 24 to 33 is cleaved from the precursor; the sequence is DPSLSNELDR. Cysteines 37 and 120 form a disulfide. Serine 170 (nucleophile) is an active-site residue. The Charge relay system role is filled by aspartate 198. Disulfide bonds link cysteine 209-cysteine 214 and cysteine 252-cysteine 261. Histidine 263 serves as the catalytic Charge relay system. 3 disulfide bridges follow: cysteine 278/cysteine 302, cysteine 279/cysteine 327, and cysteine 295/cysteine 300.

The protein belongs to the AB hydrolase superfamily. Lipase family. Not glycosylated. In terms of tissue distribution, expressed by the venom gland.

It localises to the secreted. The catalysed reaction is a 1,2-diacyl-sn-glycero-3-phosphocholine + H2O = a 2-acyl-sn-glycero-3-phosphocholine + a fatty acid + H(+). Its function is as follows. Catalyzes the hydrolysis of phosphatidylcholine with phospholipase A1 activity (3.6 U/ml). May act as an allergen and induce hemolytic activity. In vivo, a mixture of this protein and Ves a 1.02 is able to paralyze crickets. This is Phospholipase A1 1 from Vespa affinis (Lesser banded hornet).